Here is a 175-residue protein sequence, read N- to C-terminus: Transcription factor E (175 aa).

An HTH TFE/IIEalpha-type domain is found at 3–88 (ENPLIQQVLF…TWKPSLEKVP (86 aa)).

It belongs to the TFE family. Monomer. Interaction with RNA polymerase subunits RpoF and RpoE is necessary for Tfe stimulatory transcription activity. Able to interact with Tbp and RNA polymerase in the absence of DNA promoter. Interacts both with the preinitiation and elongation complexes.

In terms of biological role, transcription factor that plays a role in the activation of archaeal genes transcribed by RNA polymerase. Facilitates transcription initiation by enhancing TATA-box recognition by TATA-box-binding protein (Tbp), and transcription factor B (Tfb) and RNA polymerase recruitment. Not absolutely required for transcription in vitro, but particularly important in cases where Tbp or Tfb function is not optimal. It dynamically alters the nucleic acid-binding properties of RNA polymerases by stabilizing the initiation complex and destabilizing elongation complexes. Seems to translocate with the RNA polymerase following initiation and acts by binding to the non template strand of the transcription bubble in elongation complexes. The protein is Transcription factor E of Methanococcus maripaludis (strain C7 / ATCC BAA-1331).